Consider the following 321-residue polypeptide: uncharacterized protein (321 aa).

Residues methionine 1–phenylalanine 80 are disordered.

This is an uncharacterized protein from Mus musculus (Mouse).